The primary structure comprises 121 residues: Large ribosomal subunit protein eL18 (121 aa).

The protein belongs to the eukaryotic ribosomal protein eL18 family.

The chain is Large ribosomal subunit protein eL18 from Methanosphaerula palustris (strain ATCC BAA-1556 / DSM 19958 / E1-9c).